Here is a 317-residue protein sequence, read N- to C-terminus: Transaldolase (317 aa).

Residue Lys126 is the Schiff-base intermediate with substrate of the active site.

It belongs to the transaldolase family. Type 1 subfamily. As to quaternary structure, homodimer.

It is found in the cytoplasm. It catalyses the reaction D-sedoheptulose 7-phosphate + D-glyceraldehyde 3-phosphate = D-erythrose 4-phosphate + beta-D-fructose 6-phosphate. It participates in carbohydrate degradation; pentose phosphate pathway; D-glyceraldehyde 3-phosphate and beta-D-fructose 6-phosphate from D-ribose 5-phosphate and D-xylulose 5-phosphate (non-oxidative stage): step 2/3. Functionally, transaldolase is important for the balance of metabolites in the pentose-phosphate pathway. In Burkholderia vietnamiensis (strain G4 / LMG 22486) (Burkholderia cepacia (strain R1808)), this protein is Transaldolase.